The following is a 211-amino-acid chain: Dual specificity protein phosphatase 26 (211 aa).

One can recognise a Tyrosine-protein phosphatase domain in the interval 60-207; sequence NHADEVWPGL…LLALDRRLRQ (148 aa). Cysteine 152 (phosphocysteine intermediate) is an active-site residue.

The protein belongs to the protein-tyrosine phosphatase family. Non-receptor class dual specificity subfamily. Interacts with HSF4. In terms of tissue distribution, brain. In the brain it is expressed ubiquitously except in the hippocampus. Expressed in embryonal cancers (retinoblastoma, neuroepithilioma and neuroblastoma) and in anaplatic thyroid cancer.

The protein resides in the cytoplasm. The protein localises to the nucleus. Its subcellular location is the golgi apparatus. It catalyses the reaction O-phospho-L-tyrosyl-[protein] + H2O = L-tyrosyl-[protein] + phosphate. The catalysed reaction is O-phospho-L-seryl-[protein] + H2O = L-seryl-[protein] + phosphate. It carries out the reaction O-phospho-L-threonyl-[protein] + H2O = L-threonyl-[protein] + phosphate. Inactivates MAPK1 and MAPK3 which leads to dephosphorylation of heat shock factor protein 4 and a reduction in its DNA-binding activity. Inhibits MAP kinase p38 by dephosphorylating it and inhibits p38-mediated apoptosis in anaplastic thyroid cancer cells. Can also induce activation of MAP kinase p38 and c-Jun N-terminal kinase (JNK). This chain is Dual specificity protein phosphatase 26 (DUSP26), found in Homo sapiens (Human).